The following is a 344-amino-acid chain: Large ribosomal subunit protein uL3 (344 aa).

It belongs to the universal ribosomal protein uL3 family. As to quaternary structure, part of the 50S ribosomal subunit. Forms a cluster with proteins L14 and L24e.

Functionally, one of the primary rRNA binding proteins, it binds directly near the 3'-end of the 23S rRNA, where it nucleates assembly of the 50S subunit. The sequence is that of Large ribosomal subunit protein uL3 from Aeropyrum pernix (strain ATCC 700893 / DSM 11879 / JCM 9820 / NBRC 100138 / K1).